Here is a 51-residue protein sequence, read N- to C-terminus: Epididymal sperm protein E (51 aa).

A zinc finger spans residues 8 to 39 (CVRCRRKTPSFNSKTVTFRNKRRAIRSHCAYC).

In terms of tissue distribution, sperm.

The protein localises to the nucleus. The sequence is that of Epididymal sperm protein E from Sepia officinalis (Common cuttlefish).